Here is a 507-residue protein sequence, read N- to C-terminus: DNA replication licensing factor MCM6 (507 aa).

Positions 32–239 constitute an MCM domain; that stretch reads LYHNLCTSLF…TDYAIARRIV (208 aa). ATP is bound by residues His-45, Ser-85, Thr-86, Ala-87, Lys-88, Ser-89, and Asn-190. The Arginine finger signature appears at 214–217; it reads SRFD. ADP contacts are provided by Arg-305 and Glu-308. Residue Lys-329 is modified to N6-acetyllysine. The interval 365 to 392 is disordered; sequence GPGGINGHADSPAPVNGFNGSGEDASQE. Phosphoserine occurs at positions 375, 390, and 448. A Phosphothreonine modification is found at Thr-477.

The protein belongs to the MCM family. In terms of assembly, component of the MCM2-7 complex. The complex forms a toroidal hexameric ring with the proposed subunit order MCM2-MCM6-MCM4-MCM7-MCM3-MCM5. Component of the CMG helicase complex, a hexameric ring of related MCM2-7 subunits stabilized by CDC45 and the tetrameric GINS complex. May interact with MCM10. Interacts with TIPIN. Interacts with CDT1. Interacts with MCMBP. Interacts with DDI2. O-glycosylated (O-GlcNAcylated), in a cell cycle-dependent manner.

The protein resides in the nucleus. Its subcellular location is the chromosome. It carries out the reaction ATP + H2O = ADP + phosphate + H(+). In terms of biological role, acts as a component of the MCM2-7 complex (MCM complex) which is the replicative helicase essential for 'once per cell cycle' DNA replication initiation and elongation in eukaryotic cells. Core component of CDC45-MCM-GINS (CMG) helicase, the molecular machine that unwinds template DNA during replication, and around which the replisome is built. The active ATPase sites in the MCM2-7 ring are formed through the interaction surfaces of two neighboring subunits such that a critical structure of a conserved arginine finger motif is provided in trans relative to the ATP-binding site of the Walker A box of the adjacent subunit. The six ATPase active sites, however, are likely to contribute differentially to the complex helicase activity. The sequence is that of DNA replication licensing factor MCM6 (Mcm6) from Rattus norvegicus (Rat).